The following is a 179-amino-acid chain: MSRIGRLPITVPAGVDVTIDGAAVTVKGPKGELSHTVAAPISVERTEDGTLQVTRPDDERVSRSLHGLTRTLISNMVEGVTKGYEKKLEIVGTGYRVTPKGSDLEFALGFSHPVVVKAPAGITFAVENNTRFSVAGIDKQQVGEIAANIRKLRKPDPYKGKGVRYAGEQIRRKVGKAGK.

It belongs to the universal ribosomal protein uL6 family. Part of the 50S ribosomal subunit.

Its function is as follows. This protein binds to the 23S rRNA, and is important in its secondary structure. It is located near the subunit interface in the base of the L7/L12 stalk, and near the tRNA binding site of the peptidyltransferase center. The chain is Large ribosomal subunit protein uL6 from Kineococcus radiotolerans (strain ATCC BAA-149 / DSM 14245 / SRS30216).